Reading from the N-terminus, the 129-residue chain is Phosphoribosyl-AMP cyclohydrolase (129 aa).

Residue Asp78 participates in Mg(2+) binding. Residue Cys79 participates in Zn(2+) binding. Positions 80 and 82 each coordinate Mg(2+). Zn(2+)-binding residues include Cys96 and Cys103.

Belongs to the PRA-CH family. Homodimer. Mg(2+) is required as a cofactor. Requires Zn(2+) as cofactor.

Its subcellular location is the cytoplasm. It catalyses the reaction 1-(5-phospho-beta-D-ribosyl)-5'-AMP + H2O = 1-(5-phospho-beta-D-ribosyl)-5-[(5-phospho-beta-D-ribosylamino)methylideneamino]imidazole-4-carboxamide. Its pathway is amino-acid biosynthesis; L-histidine biosynthesis; L-histidine from 5-phospho-alpha-D-ribose 1-diphosphate: step 3/9. Its function is as follows. Catalyzes the hydrolysis of the adenine ring of phosphoribosyl-AMP. The chain is Phosphoribosyl-AMP cyclohydrolase from Nitrosomonas europaea (strain ATCC 19718 / CIP 103999 / KCTC 2705 / NBRC 14298).